Here is a 156-residue protein sequence, read N- to C-terminus: Ribonuclease P protein component (156 aa).

Positions 126–156 are disordered; the sequence is GLRKLGVTPGGGRSPAPRAHSGARPRTDARS.

This sequence belongs to the RnpA family. Consists of a catalytic RNA component (M1 or rnpB) and a protein subunit.

It carries out the reaction Endonucleolytic cleavage of RNA, removing 5'-extranucleotides from tRNA precursor.. RNaseP catalyzes the removal of the 5'-leader sequence from pre-tRNA to produce the mature 5'-terminus. It can also cleave other RNA substrates such as 4.5S RNA. The protein component plays an auxiliary but essential role in vivo by binding to the 5'-leader sequence and broadening the substrate specificity of the ribozyme. In Nocardia farcinica (strain IFM 10152), this protein is Ribonuclease P protein component.